We begin with the raw amino-acid sequence, 448 residues long: Tapasin (448 aa).

An N-terminal signal peptide occupies residues 1–20 (MKSLSLLLAVALGLATAVSA). The Lumenal segment spans residues 21–414 (GPAVIECWFV…LSGPSLEDSI (394 aa)). C27 and C91 are disulfide-bonded. An N-linked (GlcNAc...) asparagine glycan is attached at N253. An Ig-like C1-type domain is found at 292-399 (PKVSLMPATL…PASGRSAEVT (108 aa)). C315 and C382 are joined by a disulfide. A helical transmembrane segment spans residues 415–435 (GLFLSAFFLLGLFKALGWAAV). At 436 to 448 (YLSTCKDSKKKAE) the chain is on the cytoplasmic side.

As to quaternary structure, heterodimer with PDIA3; disulfide-linked. Obligatory mediator for the interaction between newly assembled MHC class I molecules, calreticulin, PDIA3 and TAP. Up to 4 MHC class I/tapasin complexes bind to 1 TAP. Interacts with HLA-G-B2M complex; this interaction is required for loading of high affinity peptides. On its own or as part of MHC class I peptide loading complex, interacts with ligand-free MR1 or MR1-B2M complex, providing for stable MR1 pools ready for metabolite antigen processing.

It localises to the endoplasmic reticulum membrane. Involved in the association of MHC class I with transporter associated with antigen processing (TAP) and in the assembly of MHC class I with peptide (peptide loading). The polypeptide is Tapasin (TAPBP) (Chlorocebus aethiops (Green monkey)).